The chain runs to 497 residues: Interferon regulatory factor 5 (497 aa).

A Nuclear localization signal motif is present at residues 12-18 (PRRVRLK). The IRF tryptophan pentad repeat DNA-binding region spans 14–122 (RVRLKPWLVA…QPYKIYEVCS (109 aa)). Positions 124–178 (GPAPTESQPTDDYVLGEEEEEEEEELQRMLPGLSITEPALPGPPNAPYSLPKEDT) are disordered. Residues 137–148 (VLGEEEEEEEEE) are compositionally biased toward acidic residues. Positions 149 to 159 (LQRMLPGLSIT) match the Nuclear export signal motif. Ser-157 is modified (phosphoserine; by TBK1). A Phosphoserine modification is found at Ser-300. Glycyl lysine isopeptide (Lys-Gly) (interchain with G-Cter in ubiquitin) cross-links involve residues Lys-410 and Lys-411. Residue Ser-430 is modified to Phosphoserine. A Phosphoserine; by IKKB modification is found at Ser-434. Ser-436 and Ser-439 each carry phosphoserine. Ser-445 is subject to Phosphoserine; by IKKB.

This sequence belongs to the IRF family. As to quaternary structure, homodimer, when phosphorylated. Interacts with TASL (via pLxIS motif); interaction takes place downstream of TLR7, TLR8 or TLR9, leading to its activation. Interacts with MYD88 and TRAF6. In terms of processing, phosphorylation of serine and threonine residues by IKBKB in a C-terminal autoinhibitory region, stimulates dimerization, transport into the nucleus, assembly with the coactivator CBP/EP300 and initiation of transcription. Post-translationally, 'Lys-63'-linked polyubiquitination by TRAF6 is required for activation.

It is found in the cytoplasm. Its subcellular location is the nucleus. Maintained as a monomer in an autoinhibited state. Phosphorylation and activation follow the following steps: innate adapter protein TASL recruits IRF5, thereby licensing IRF5 for phosphorylation by IKBKB. Phosphorylated IRF5 dissociates from the adapter proteins, dimerizes, and then enters the nucleus to induce IFNs. Functionally, transcription factor that plays a critical role in innate immunity by activating expression of type I interferon (IFN) IFNA and INFB and inflammatory cytokines downstream of endolysosomal toll-like receptors TLR7, TLR8 and TLR9. Regulates the transcription of type I IFN genes (IFN-alpha and IFN-beta) and IFN-stimulated genes (ISG) by binding to an interferon-stimulated response element (ISRE) in their promoters. Can efficiently activate both the IFN-beta (IFNB) and the IFN-alpha (IFNA) genes and mediate their induction downstream of the TLR-activated, MyD88-dependent pathway. This Mus musculus (Mouse) protein is Interferon regulatory factor 5.